The primary structure comprises 179 residues: Large ribosomal subunit protein uL5 (179 aa).

The protein belongs to the universal ribosomal protein uL5 family. As to quaternary structure, part of the 50S ribosomal subunit; part of the 5S rRNA/L5/L18/L25 subcomplex. Contacts the 5S rRNA and the P site tRNA. Forms a bridge to the 30S subunit in the 70S ribosome.

Functionally, this is one of the proteins that bind and probably mediate the attachment of the 5S RNA into the large ribosomal subunit, where it forms part of the central protuberance. In the 70S ribosome it contacts protein S13 of the 30S subunit (bridge B1b), connecting the 2 subunits; this bridge is implicated in subunit movement. Contacts the P site tRNA; the 5S rRNA and some of its associated proteins might help stabilize positioning of ribosome-bound tRNAs. The sequence is that of Large ribosomal subunit protein uL5 from Rickettsia akari (strain Hartford).